The following is a 6733-amino-acid chain: Replicase polyprotein 1ab (6733 aa).

Residues 1633–1814 enclose the Macro domain; it reads FNQYYEFKVG…QYIEALGVVE (182 aa). Positions 2183–2565 are HD1; that stretch reads LTHVNKFKIV…IMLPVFVIIL (383 aa). The next 10 helical transmembrane spans lie at 2191-2211, 2219-2239, 2266-2286, 2411-2431, 2521-2541, 2546-2566, 2769-2789, 2937-2957, 2986-3006, and 3022-3042; these read IVVY…DFSL, VFLL…LGLV, GVHW…DFFV, ALWF…PLMF, VAVS…IVVL, FVWF…IILF, VMLI…FMVG, IISP…FLFL, VLFV…LALW, and LFIL…GFVF. The HD2 stretch occupies residues 2769 to 3042; the sequence is VMLIIALGAI…FVLIVGGFVF (274 aa). Catalysis depends on charge relay system; for 3C-like serine proteinase activity residues H3184, E3222, and S3291. A run of 7 helical transmembrane segments spans residues 3422 to 3442, 3456 to 3478, 3486 to 3506, 3514 to 3534, 3538 to 3558, 3573 to 3593, and 3598 to 3613; these read SNVS…FLVC, VVLP…VLFW, LAVT…LGLF, VGLI…VVVN, AIFV…LGVV, AVFA…LILF, and LMSF…FRVF. An HD3 region spans residues 3430-3613; the sequence is NLHFIFSVYF…VVIVLSFRVF (184 aa). Residues 4442–4673 form the NiRAN domain; it reads DFKLLRDVWC…AKEMNVPADF (232 aa). In terms of domain architecture, RdRp catalytic spans 4981–5132; it reads FDVFGSDYTK…FSKPGALKIF (152 aa). A CV ZBD domain is found at 5289–5404; the sequence is FDRVCFCCPN…NGVAQLLTPV (116 aa). 12 residues coordinate Zn(2+): C5293, C5296, C5304, C5307, C5314, C5317, H5321, H5327, C5336, C5338, C5359, and C5362. Residues 5509–5688 form the (+)RNA virus helicase ATP-binding domain; that stretch reads NQPWRLATCF…LQLATQKRYL (180 aa). The (+)RNA virus helicase C-terminal domain maps to 5689–5848; that stretch reads TACYRCPPQI…FGMEKQSDFN (160 aa). The ExoN domain maps to 5846-6059; it reads DFNIIPEVAS…YLASYDAAFK (214 aa). Catalysis depends on residues D5860, E5862, and D5961. Zn(2+) is bound by residues H6025, C6029, and H6033. Residues H6037 and D6042 contribute to the active site. C6048 contacts Zn(2+). Residues 6327 to 6467 form the NendoU domain; that stretch reads LPETLFSTGR…GEDDIQTFYP (141 aa). Catalysis depends on residues H6363, H6380, K6412, K6509, D6585, K6613, and E6647. Residues 6469–6733 form the Nidovirus-type SAM-dependent 2'-O-MTase domain; that stretch reads KEFIRSYYEW…EVPLLCQMKH (265 aa).

In terms of processing, specific enzymatic cleavages in vivo by its own protease yield mature proteins. 3CL-PRO is autocatalytically processed.

The protein localises to the host membrane. The catalysed reaction is RNA(n) + a ribonucleoside 5'-triphosphate = RNA(n+1) + diphosphate. It carries out the reaction ATP + H2O = ADP + phosphate + H(+). Functionally, the 3C-like serine proteinase is responsible for the majority of cleavages. The helicase which contains a zinc finger structure displays RNA and DNA duplex-unwinding activities with 5' to 3' polarity. In terms of biological role, acts on both ssRNA and dsRNA in a 3' to 5' direction. Its function is as follows. NendoU is a Mn(2+)-dependent, uridylate-specific enzyme, which leaves 2'-3'-cyclic phosphates 5' to the cleaved bond. The polypeptide is Replicase polyprotein 1ab (rep) (Bos taurus (Bovine)).